A 317-amino-acid chain; its full sequence is Glycine--tRNA ligase alpha subunit (317 aa).

It belongs to the class-II aminoacyl-tRNA synthetase family. Tetramer of two alpha and two beta subunits.

Its subcellular location is the cytoplasm. It carries out the reaction tRNA(Gly) + glycine + ATP = glycyl-tRNA(Gly) + AMP + diphosphate. This is Glycine--tRNA ligase alpha subunit from Lactococcus lactis subsp. cremoris (strain SK11).